The chain runs to 185 residues: Ribosome-recycling factor (185 aa).

The segment at 137–166 (DGLKKAEKDGDIGQDESRGQSEKVQKMTDD) is disordered.

Belongs to the RRF family.

Its subcellular location is the cytoplasm. Functionally, responsible for the release of ribosomes from messenger RNA at the termination of protein biosynthesis. May increase the efficiency of translation by recycling ribosomes from one round of translation to another. The protein is Ribosome-recycling factor of Agrobacterium fabrum (strain C58 / ATCC 33970) (Agrobacterium tumefaciens (strain C58)).